The sequence spans 129 residues: Small ribosomal subunit protein uS11 (129 aa).

The protein belongs to the universal ribosomal protein uS11 family. As to quaternary structure, part of the 30S ribosomal subunit. Interacts with proteins S7 and S18. Binds to IF-3.

Functionally, located on the platform of the 30S subunit, it bridges several disparate RNA helices of the 16S rRNA. Forms part of the Shine-Dalgarno cleft in the 70S ribosome. This chain is Small ribosomal subunit protein uS11, found in Geobacillus stearothermophilus (Bacillus stearothermophilus).